The primary structure comprises 408 residues: Acetate kinase (408 aa).

N7 provides a ligand contact to Mg(2+). Position 14 (K14) interacts with ATP. Residue R91 coordinates substrate. The Proton donor/acceptor role is filled by D148. Residues H208 to G212 and D283 to R285 each bind ATP. E388 is a Mg(2+) binding site.

The protein belongs to the acetokinase family. Homodimer. Mg(2+) is required as a cofactor. It depends on Mn(2+) as a cofactor.

The protein localises to the cytoplasm. It catalyses the reaction acetate + ATP = acetyl phosphate + ADP. Its pathway is metabolic intermediate biosynthesis; acetyl-CoA biosynthesis; acetyl-CoA from acetate: step 1/2. In terms of biological role, catalyzes the formation of acetyl phosphate from acetate and ATP. Can also catalyze the reverse reaction. This Borrelia hermsii (strain HS1 / DAH) protein is Acetate kinase.